The chain runs to 173 residues: RNA polymerase sigma factor TcsR (173 aa).

A sigma-70 factor domain-4 region spans residues 122–169 (IKDLTQNEKNIIRKIYLDRLRESEISRELNISRQAVNKTHLRALEKLK). Positions 143–162 (ESEISRELNISRQAVNKTHL) form a DNA-binding region, H-T-H motif.

Belongs to the sigma-70 factor family.

In terms of biological role, sigma factors are initiation factors that promote the attachment of RNA polymerase to specific initiation sites and are then released. Transcriptional regulator specifically required to activate expression of the toxin gene locus, composed of tcsL, tcsH and tcdE/utxA. The sequence is that of RNA polymerase sigma factor TcsR from Paraclostridium sordellii (Clostridium sordellii).